Here is a 168-residue protein sequence, read N- to C-terminus: Large ribosomal subunit protein uL24 (168 aa).

The segment at leucine 112–asparagine 168 is disordered.

This sequence belongs to the universal ribosomal protein uL24 family. Part of the 50S ribosomal subunit.

One of two assembly initiator proteins, it binds directly to the 5'-end of the 23S rRNA, where it nucleates assembly of the 50S subunit. Functionally, located at the polypeptide exit tunnel on the outside of the subunit. The sequence is that of Large ribosomal subunit protein uL24 from Nitrosopumilus maritimus (strain SCM1).